A 626-amino-acid chain; its full sequence is Probable potassium transport system protein Kup (626 aa).

The next 12 helical transmembrane spans lie at 13–33 (VALMMGALGVVYGDIGTSPLY), 53–73 (VLSILFWLLMVVVSFKYVLLI), 102–122 (FFVVLGIFGAALFYGDSMITP), 138–158 (HTLDPWIVPLALLVLLALFAI), 169–189 (LFGPVMVVWFATLGVLGGWQV), 207–227 (FVFEFPVMSFLLLGAVVLALT), 248–268 (WFSMVLPSLTLCYLGQGALLL), 277–297 (PFFLMAPEWGLAALVGLATVA), 338–358 (IYLPQVNALLLCAVLVLVITF), 367–387 (AYGFAVTGTMLMTSILAFAVL), 399–419 (WMLVLGVLLIIDVLLFSANIF), and 421–441 (IHEGGWMPLLVGVVVFTLMMT).

Belongs to the HAK/KUP transporter (TC 2.A.72) family.

It localises to the cell inner membrane. The enzyme catalyses K(+)(in) + H(+)(in) = K(+)(out) + H(+)(out). Its function is as follows. Transport of potassium into the cell. Likely operates as a K(+):H(+) symporter. The chain is Probable potassium transport system protein Kup from Bordetella avium (strain 197N).